A 538-amino-acid polypeptide reads, in one-letter code: Putative ABC1 protein At2g40090 (538 aa).

The N-terminal stretch at 1-26 (MAARSLWRTRTKLLVVGTALCGGSGA) is a signal peptide.

The protein belongs to the protein kinase superfamily. ADCK protein kinase family.

This is Putative ABC1 protein At2g40090 from Arabidopsis thaliana (Mouse-ear cress).